Here is a 461-residue protein sequence, read N- to C-terminus: ATP-dependent protease ATPase subunit HslU (461 aa).

Residues V21, 63–68 (GVGKTE), D274, E339, and R411 contribute to the ATP site.

It belongs to the ClpX chaperone family. HslU subfamily. As to quaternary structure, a double ring-shaped homohexamer of HslV is capped on each side by a ring-shaped HslU homohexamer. The assembly of the HslU/HslV complex is dependent on binding of ATP.

Its subcellular location is the cytoplasm. In terms of biological role, ATPase subunit of a proteasome-like degradation complex; this subunit has chaperone activity. The binding of ATP and its subsequent hydrolysis by HslU are essential for unfolding of protein substrates subsequently hydrolyzed by HslV. HslU recognizes the N-terminal part of its protein substrates and unfolds these before they are guided to HslV for hydrolysis. The protein is ATP-dependent protease ATPase subunit HslU of Caldanaerobacter subterraneus subsp. tengcongensis (strain DSM 15242 / JCM 11007 / NBRC 100824 / MB4) (Thermoanaerobacter tengcongensis).